The following is a 436-amino-acid chain: Testican-3 (436 aa).

A signal peptide spans 1–22; it reads MLKVSALLCVCAAAWCSQTLAA. Disulfide bonds link Cys-90–Cys-101, Cys-95–Cys-111, Cys-139–Cys-169, Cys-142–Cys-162, Cys-151–Cys-183, Cys-317–Cys-341, Cys-352–Cys-359, and Cys-361–Cys-380. The Kazal-like domain maps to 133-185; that stretch reads GLPSSTCKPCPIAYASPVCGSDGHSYSSQCKLEYQACVLGKQISIKCEGRCPC. One can recognise a Thyroglobulin type-1 domain in the interval 314-380; it reads DPPCHTELSN…GSRINGVADC (67 aa). Ser-387 and Ser-392 each carry an O-linked (Xyl...) (glycosaminoglycan) serine glycan. Positions 393–436 are disordered; it reads GDFREWTDDEGEEDDIMNDKDDIEDDDEDEGDDDDDGDVHDGYI. Acidic residues predominate over residues 399–430; sequence TDDEGEEDDIMNDKDDIEDDDEDEGDDDDDGD.

In terms of processing, contains chondroitin sulfate and heparan sulfate O-linked oligosaccharides. As to expression, expressed in brain.

Its subcellular location is the secreted. It localises to the extracellular space. The protein localises to the extracellular matrix. In terms of biological role, may participate in diverse steps of neurogenesis. Inhibits the processing of pro-matrix metalloproteinase 2 (MMP-2) by MT1-MMP and MT3-MMP. May interfere with tumor invasion. The protein is Testican-3 (Spock3) of Mus musculus (Mouse).